A 337-amino-acid polypeptide reads, in one-letter code: Diacylglycerol acyltransferase/mycolyltransferase Ag85A (337 aa).

The signal sequence occupies residues 1-42 (MKLVDRFRGAATGTSRRLMVGAVGAALLSGLVGFVGGSATAS). 85–86 (MR) contributes to the substrate binding site. The interval 101–111 (FEWYYQSGISV) is fibronectin-binding. A disulfide bond links Cys-130 and Cys-135. Substrate is bound by residues Ser-169 and Asp-197. Ser-169 serves as the catalytic Nucleophile. Glu-273 is an active-site residue. Residues 275 to 278 (FVRT), Lys-282, and 305 to 307 (HSW) contribute to the substrate site. The active site involves His-305.

This sequence belongs to the mycobacterial A85 antigen family. In terms of assembly, homodimer.

The protein localises to the secreted. It localises to the cell wall. It is found in the cytoplasm. The enzyme catalyses an acyl-CoA + a 1,2-diacyl-sn-glycerol = a triacyl-sn-glycerol + CoA. It catalyses the reaction 2 alpha,alpha'-trehalose 6-mycolate = alpha,alpha'-trehalose 6,6'-bismycolate + alpha,alpha-trehalose. In terms of biological role, the antigen 85 proteins (FbpA, FbpB, FbpC) are responsible for the high affinity of mycobacteria for fibronectin, a large adhesive glycoprotein, which facilitates the attachment of M.tuberculosis to murine alveolar macrophages (AMs). They also help to maintain the integrity of the cell wall by catalyzing the transfer of mycolic acids to cell wall arabinogalactan, and through the synthesis of alpha,alpha-trehalose dimycolate (TDM, cord factor). They catalyze the transfer of a mycoloyl residue from one molecule of alpha,alpha-trehalose monomycolate (TMM) to another TMM, leading to the formation of TDM. FbpA mediates triacylglycerol (TAG) formation with long-chain acyl-CoA as the acyl donor and 1,2-dipalmitoyl-sn-glycerol (1,2-dipalmitin) as the acyl acceptor. It has a preference for C26:0-CoA over C18:1-CoA. This Mycobacterium ulcerans protein is Diacylglycerol acyltransferase/mycolyltransferase Ag85A (fbpA).